The chain runs to 1580 residues: Transcriptional activator GLI3 (1580 aa).

Residue methionine 1 is modified to N-acetylmethionine. Polar residues-rich tracts occupy residues 1–10 (MEAQSHSSTT) and 58–78 (ITMQ…PSTS). The tract at residues 1–79 (MEAQSHSSTT…KVSEEPSTSS (79 aa)) is disordered. The residue at position 175 (arginine 175) is an Omega-N-methylarginine. A disordered region spans residues 368–475 (QSLGSAFGHS…DKDESKQEPE (108 aa)). Positions 401–427 (NPVQVSSGPSESSQNKPTSESAVSSTG) are enriched in polar residues. Glycyl lysine isopeptide (Lys-Gly) (interchain with G-Cter in SUMO2) cross-links involve residues lysine 438 and lysine 462. The span at 461 to 474 (VKEEGDKDESKQEP) shows a compositional bias: basic and acidic residues. 5 consecutive C2H2-type zinc fingers follow at residues 480–505 (TNCH…NNDH), 513–540 (FVCR…MRRH), 546–570 (HKCT…LRSH), 576–601 (YVCE…NRTH), and 607–632 (YVCK…KTVH). Positions 620 to 728 (DPSSLRKHVK…PISNYSNSGL (109 aa)) are disordered. Basic and acidic residues predominate over residues 632-648 (HGPEAHVTKKQRGDIHP). A Phosphoserine modification is found at serine 664. Over residues 684 to 699 (SKREECLQVKTVKAEK) the composition is skewed to basic and acidic residues. Residues 703 to 726 (SQPSPGGQSSCSSQQSPISNYSNS) are compositionally biased toward low complexity. The interval 745-845 (DETPIMDSTI…VDVTMLNMLN (101 aa)) is mediates interaction with DZIP1. Lysine 773 participates in a covalent cross-link: Glycyl lysine isopeptide (Lys-Gly) (interchain with G-Cter in ubiquitin). Lysine 779 participates in a covalent cross-link: Glycyl lysine isopeptide (Lys-Gly) (interchain with G-Cter in SUMO2); alternate. Lysine 779 is covalently cross-linked (Glycyl lysine isopeptide (Lys-Gly) (interchain with G-Cter in ubiquitin); alternate). Glycyl lysine isopeptide (Lys-Gly) (interchain with G-Cter in ubiquitin) cross-links involve residues lysine 784 and lysine 800. Phosphoserine; by PKA is present on residues serine 849, serine 865, serine 877, and serine 907. Positions 863–882 (RSSGISPCFSSRRSSEASQA) are enriched in low complexity. The disordered stretch occupies residues 863–918 (RSSGISPCFSSRRSSEASQAEGRPQNVSVADSYDPISTDASRRSSEASQSDGLPSL). Residues 908 to 918 (EASQSDGLPSL) show a composition bias toward polar residues. Phosphoserine; by PKA is present on residues serine 980 and serine 1006. The segment at 981–1042 (DGGAHGYGRR…PAMATSAEKR (62 aa)) is disordered.

Belongs to the GLI C2H2-type zinc-finger protein family. The full-length GLI3 form (GLI3FL) interacts with SUFU and this interaction regulates the formation of either repressor or activator forms of GLI3. Its association with SUFU is regulated by Hh signaling and dissociation of the SUFU-GLI3 interaction requires the presence of the ciliary motor KIF3A. Interacts with KIF7. The activator form of GLI3 (GLI3A) but not the repressor form (GLI3R) can interact with TRPS1. The phosphorylated form interacts with BTRC. Interacts with ZIC1. Interacts with ZIC3 (via C2H2-type domains 3, 4 and 5); the interaction enhances its transcriptional activity. Interacts with WRD11; the interaction associates EMX1 with GLI3. Interacts with DZIP1; retains GLI3 within the cytoplasm. Phosphorylated on multiple sites by protein kinase A (PKA) and phosphorylation by PKA primes further phosphorylation by CK1 and GSK3. Phosphorylated by DYRK2 (in vitro). Phosphorylation is essential for its proteolytic processing. In terms of processing, transcriptional repressor GLI3R, a C-terminally truncated form, is generated from the full-length GLI3 protein (GLI3FL/GLI3-190) through proteolytic processing. This process requires PKA-primed phosphorylation of GLI3, ubiquitination of GLI3 and the presence of BTRC. GLI3FL is complexed with SUFU in the cytoplasm and is maintained in a neutral state. Without the Hh signal, the SUFU-GLI3 complex is recruited to cilia, leading to the efficient processing of GLI3FL into GLI3R. GLI3R formation leads to its dissociation from SUFU, allowing it to translocate into the nucleus, and repress Hh target genes. When Hh signaling is initiated, SUFU dissociates from GLI3FL and this has two consequences. First, GLI3R production is halted. Second, free GLI3FL translocates to the nucleus, where it is phosphorylated, destabilized, and converted to a transcriptional activator (GLI3A). Phosphorylated in vitro by ULK3. Is expressed in a wide variety of normal adult tissues, including lung, colon, spleen, placenta, testis, and myometrium.

It localises to the nucleus. Its subcellular location is the cytoplasm. The protein localises to the cell projection. It is found in the cilium. Has a dual function as a transcriptional activator and a repressor of the sonic hedgehog (Shh) pathway, and plays a role in limb development. The full-length GLI3 form (GLI3FL) after phosphorylation and nuclear translocation, acts as an activator (GLI3A) while GLI3R, its C-terminally truncated form, acts as a repressor. A proper balance between the GLI3 activator and the repressor GLI3R, rather than the repressor gradient itself or the activator/repressor ratio gradient, specifies limb digit number and identity. In concert with TRPS1, plays a role in regulating the size of the zone of distal chondrocytes, in restricting the zone of PTHLH expression in distal cells and in activating chondrocyte proliferation. Binds to the minimal GLI-consensus sequence 5'-GGGTGGTC-3'. The polypeptide is Transcriptional activator GLI3 (GLI3) (Homo sapiens (Human)).